We begin with the raw amino-acid sequence, 159 residues long: Transcription elongation factor GreA (159 aa).

Residues 45–67 (NAEYHEARKEQSFVEGKIRELQL) are a coiled coil.

Belongs to the GreA/GreB family.

Its function is as follows. Necessary for efficient RNA polymerase transcription elongation past template-encoded arresting sites. The arresting sites in DNA have the property of trapping a certain fraction of elongating RNA polymerases that pass through, resulting in locked ternary complexes. Cleavage of the nascent transcript by cleavage factors such as GreA or GreB allows the resumption of elongation from the new 3'terminus. GreA releases sequences of 2 to 3 nucleotides. The sequence is that of Transcription elongation factor GreA from Neorickettsia sennetsu (strain ATCC VR-367 / Miyayama) (Ehrlichia sennetsu).